The primary structure comprises 180 residues: MSGSNMGYYDVLAGLSALEKSSQVVFSATELQQLTQQSHATDKGIEGSENSKAKVSKPKRVAVHGYLGGKVSLADAAQVEYEVGHSLLGSYVPRQQLEALSSVDFSHHFHRTLECKAALETHDVFLAGAGQLSLPFQSHIESPRNSEAKRKRKVIICKRCQSRFIGSHRRSQLREHACVD.

In terms of assembly, interacts with STH1, RSC3 and ARP9. Component of the two forms of the RSC complex composed of at least either RSC1 or RSC2, and ARP7, ARP9, LDB7, NPL6, RSC3, RSC30, RSC4, RSC58, RSC6, RSC8, RSC9, SFH1, STH1, HTL1 and probably RTT102. The complexes interact with histone and histone variant components of centromeric chromatin. Component of a fungal-specific module (HTL1-LDB7-NPL6-RSC3-RSC30) within the RSC complex.

It is found in the nucleus. Component of the chromatin structure-remodeling complex (RSC), which is involved in transcription regulation and nucleosome positioning. RSC is responsible for the transfer of a histone octamer from a nucleosome core particle to naked DNA. The reaction requires ATP and involves an activated RSC-nucleosome intermediate. Remodeling reaction also involves DNA translocation, DNA twist and conformational change. As a reconfigurer of centromeric and flanking nucleosomes, RSC complex is required both for proper kinetochore function in chromosome segregation and, via a PKC1-dependent signaling pathway, for organization of the cellular cytoskeleton. Together with HTL1, NPL6, RSC3, RSC30 components, defines a fungal-specific module within the RSC complex that plays a role in many cellular functions including the maintenance of cell wall integrity. May be involved in the transfer of mannosylphosphate (MP) groups into N-linked oligosaccharides. The polypeptide is Chromatin structure-remodeling complex protein RSC14 (LDB7) (Saccharomyces cerevisiae (strain ATCC 204508 / S288c) (Baker's yeast)).